Consider the following 189-residue polypeptide: Pyridoxal 5'-phosphate synthase subunit PdxT (189 aa).

46–48 lines the L-glutamine pocket; the sequence is GES. Cys78 functions as the Nucleophile in the catalytic mechanism. L-glutamine is bound by residues Arg107 and 136–137; that span reads IR. Catalysis depends on charge relay system residues His173 and Glu175.

It belongs to the glutaminase PdxT/SNO family. In the presence of PdxS, forms a dodecamer of heterodimers. Only shows activity in the heterodimer.

It carries out the reaction aldehydo-D-ribose 5-phosphate + D-glyceraldehyde 3-phosphate + L-glutamine = pyridoxal 5'-phosphate + L-glutamate + phosphate + 3 H2O + H(+). The catalysed reaction is L-glutamine + H2O = L-glutamate + NH4(+). Its pathway is cofactor biosynthesis; pyridoxal 5'-phosphate biosynthesis. Catalyzes the hydrolysis of glutamine to glutamate and ammonia as part of the biosynthesis of pyridoxal 5'-phosphate. The resulting ammonia molecule is channeled to the active site of PdxS. This is Pyridoxal 5'-phosphate synthase subunit PdxT from Roseiflexus castenholzii (strain DSM 13941 / HLO8).